The following is a 200-amino-acid chain: Casparian strip membrane protein 1 (200 aa).

Over 1–38 the chain is Cytoplasmic; it reads MSTTIEIPAESSAVAKGKAPLIGASSSSYEKKGGYKKG. Residues 39–59 traverse the membrane as a helical segment; it reads IAIFDFILRLGAVISALSAAA. Residues 60–88 lie on the Extracellular side of the membrane; the sequence is TMGTSDETLPFFTQFFQFEAGYDDFPTFQ. A helical membrane pass occupies residues 89-109; it reads FFVIAMGFVGGYLVLSLPFSV. Residues 110-121 are Cytoplasmic-facing; it reads VAIIRPHAVGIR. A helical transmembrane segment spans residues 122-142; it reads LLLLILDTVALTLNTAAAAAA. Topologically, residues 143-175 are extracellular; it reads AAIVYLAHNGNQSANWLAVCQQFGDFCQKVSGG. A glycan (N-linked (GlcNAc...) asparagine) is linked at Asn-153. Residues 176–196 form a helical membrane-spanning segment; sequence VVASFVSVLVFLLLVVMSAVA. Over 197 to 200 the chain is Cytoplasmic; it reads LRKH.

It belongs to the Casparian strip membrane proteins (CASP) family. Homodimer and heterodimers.

Its subcellular location is the cell membrane. Its function is as follows. Regulates membrane-cell wall junctions and localized cell wall deposition. Required for establishment of the Casparian strip membrane domain (CSD) and the subsequent formation of Casparian strips, a cell wall modification of the root endodermis that determines an apoplastic barrier between the intraorganismal apoplasm and the extraorganismal apoplasm and prevents lateral diffusion. In Ricinus communis (Castor bean), this protein is Casparian strip membrane protein 1.